A 556-amino-acid polypeptide reads, in one-letter code: Sensory neuron membrane protein 2 (556 aa).

The Cytoplasmic portion of the chain corresponds to 1–6; it reads MIHWSL. The helical transmembrane segment at 7 to 27 threads the bilayer; it reads IVSALGVCVAVLGGYCGWILF. At 28-522 the chain is on the extracellular side; that stretch reads PNMVHKKVEQ…KLINTLKTLN (495 aa). N-linked (GlcNAc...) asparagine glycosylation is found at Asn66, Asn274, Asn310, and Asn324. Cystine bridges form between Cys320/Cys388 and Cys349/Cys415. The chain crosses the membrane as a helical span at residues 523–543; sequence IVHWATLCGGIGVAVACLIYY. Over 544–556 the chain is Cytoplasmic; sequence IYQRGRVVEPPVK.

It belongs to the CD36 family. In terms of tissue distribution, detected in the head and to a lesser extent in legs and wings.

The protein resides in the cell membrane. Plays an olfactory role that is not restricted to pheromone sensitivity. This chain is Sensory neuron membrane protein 2, found in Drosophila melanogaster (Fruit fly).